The chain runs to 35 residues: Endochitinase 2 (35 aa).

It belongs to the glycosyl hydrolase 19 family. Chitinase class I subfamily.

It carries out the reaction Random endo-hydrolysis of N-acetyl-beta-D-glucosaminide (1-&gt;4)-beta-linkages in chitin and chitodextrins.. In terms of biological role, defense against chitin-containing fungal pathogens. In Capsicum chinense (Scotch bonnet), this protein is Endochitinase 2.